Consider the following 546-residue polypeptide: MSWKAIAKAAQAEVLDAIPTKWKLDPAKYRTLTDVTSVPRECGILSDAQLSITDLTALEVVKRIESRELTAVQALEAFGARTAIAHQLVNCLMDWFYEDGLRQAEELDKSFKATGKLKGPLHGVPVALKDFHFVAGRPTTTGYVSRRDFRPEHDSALVKTLRDAGAVFYCKTTMPQSGMAIETVSNLWGRTLNPYNTALSAGGSSGGDAVLVALKGTPITPSTDLGGSIRVPAAFNGLYAIRPTSDRIPKGGMDNINSGQISIKLSCGPICHSMEDLESFTKLINAYPENQNDPTSVPVPWKTVKPIEGKLTIGLMKWDKVVMPHPPVIRALEHTKRTLEKAGHEVVEFDVPFDCWDAIQTTFDTYYQSGHSGTLSTLEATGEPLIPAFEDLIKVFGSKEISAAESQQLNVKARIFREKFRDAWDATTKLTSTGRPVDALICPTAPAVGYPHDFNVYWGYTSLFNLLDYPSVILPVANFKVNPQDDPVASNYKPLETNPYDKPNHELYKPELFSSQPSTIQVVGRPFQDEELIKVSSVMDDLLRAM.

Active-site charge relay system residues include Lys-129 and Ser-204. The Acyl-ester intermediate role is filled by Ser-228.

It belongs to the amidase family.

Its pathway is mycotoxin biosynthesis. Amidase; part of the gene cluster that mediates the biosynthesis of butenolide, a mycotoxin that shows antibiotic activity but does not seem to play a major role in the spread of head blight in wheat. Butenolide is derived from glutamic acid via a 4-acetamido-2-butenoic acid intermediate. The predicted function of the NADH:flavin oxidoreductase FG08077, the cytochrome P450 monooxygenase FG08079, the decarboxylase FG08083, and the putative acetyltransferase FG08082 are consistent with this pathway, however, the respective activities of the butelonide biosynthesis cluster enzymes have still to be experimentally determined. This chain is Amidase FG08078, found in Gibberella zeae (strain ATCC MYA-4620 / CBS 123657 / FGSC 9075 / NRRL 31084 / PH-1) (Wheat head blight fungus).